Here is a 466-residue protein sequence, read N- to C-terminus: Fumarate hydratase class II (466 aa).

Substrate-binding positions include 100–102, Arg128, 131–134, 141–143, and Thr189; these read SGT, HPND, and SSN. Over residues 122–137 the composition is skewed to basic and acidic residues; sequence GERGERRKVHPNDDVN. Positions 122 to 143 are disordered; that stretch reads GERGERRKVHPNDDVNKGQSSN. His190 (proton donor/acceptor) is an active-site residue. Ser320 is an active-site residue. Substrate is bound by residues Ser321 and 326–328; that span reads KVN.

The protein belongs to the class-II fumarase/aspartase family. Fumarase subfamily. Homotetramer.

It is found in the cytoplasm. The catalysed reaction is (S)-malate = fumarate + H2O. The protein operates within carbohydrate metabolism; tricarboxylic acid cycle; (S)-malate from fumarate: step 1/1. Involved in the TCA cycle. Catalyzes the stereospecific interconversion of fumarate to L-malate. This chain is Fumarate hydratase class II, found in Myxococcus xanthus (strain DK1622).